The chain runs to 167 residues: NADH-quinone oxidoreductase subunit B 2 (167 aa).

4 residues coordinate [4Fe-4S] cluster: cysteine 39, cysteine 40, cysteine 104, and cysteine 134.

Belongs to the complex I 20 kDa subunit family. In terms of assembly, NDH-1 is composed of 14 different subunits. Subunits NuoB, C, D, E, F, and G constitute the peripheral sector of the complex. It depends on [4Fe-4S] cluster as a cofactor.

The protein localises to the cell inner membrane. It catalyses the reaction a quinone + NADH + 5 H(+)(in) = a quinol + NAD(+) + 4 H(+)(out). In terms of biological role, NDH-1 shuttles electrons from NADH, via FMN and iron-sulfur (Fe-S) centers, to quinones in the respiratory chain. Couples the redox reaction to proton translocation (for every two electrons transferred, four hydrogen ions are translocated across the cytoplasmic membrane), and thus conserves the redox energy in a proton gradient. The chain is NADH-quinone oxidoreductase subunit B 2 from Burkholderia mallei (strain NCTC 10247).